Consider the following 934-residue polypeptide: MVEFSDAILEPIGAVQRTRVGREATEPMRADIRLLGTILGDTLREQNGDEVFDLVERVRVESFRVRRSEIDRADMARMFSGLDIHLAIPIIRAFSHFALLANVAEDIHRERRRHIHLDAGEPLRDSSLAATYAKLDLAKLDSATVADALTGAVVSPVITAHPTETRRRTVFVTQRRITELMRLHAEGHTETADGRSIERELRRQILTLWQTALIRLARLQISDEIDVGLRYYSAALFHVIPQVNSEVRNALRARWPDAELLSGPILQPGSWIGGDRDGNPNVTADVVRRATGSAAYTVVAHYLAELTHLEQELSMSARLITVTPELATLAASCQDAACADEPYRRALRVIRGRLSSTAAHILDQQPPNQLGLGLPPYSTPAELCADLDTIEASLCTHGAALLADDRLALLREGVGVFGFHLCGLDMRQNSDVHEEVVAELLAWAGMHQDYSSLPEDQRVKLLVAELGNRRPLVGDRAQLSDLARGELAVLAAAAHAVELYGSAAVPNYIISMCQSVSDVLEVAILLKETGLLDASGSQPYCPVGISPLFETIDDLHNGAAILHAMLELPLYRTLVAARGNWQEVMLGYSDSNKDGGYLAANWAVYRAELALVDVARKTGIRLRLFHGRGGTVGRGGGPSYQAILAQPPGAVNGSLRLTEQGEVIAAKYAEPQIARRNLESLVAATLESTLLDVEGLGDAAESAYAILDEVAGLARRSYAELVNTPGFVDYFQASTPVSEIGSLNIGNRPTSRKPTTSIADLRAIPWVLAWSQSRVMLPGWYGTGSAFQQWVAAGPESESQRVEMLHDLYQRWPFFRSVLSNMAQVLAKSDLGLAARYAELVVDEALRRRVFDKIADEHRRTIAIHKLITGHDDLLADNPALARSVFNRFPYLEPLNHLQVELLRRYRSGHDDEMVQRGILLTMNGLASALRNSG.

Residues H161 and K593 contribute to the active site.

This sequence belongs to the PEPCase type 1 family. It depends on Mg(2+) as a cofactor.

It carries out the reaction oxaloacetate + phosphate = phosphoenolpyruvate + hydrogencarbonate. Forms oxaloacetate, a four-carbon dicarboxylic acid source for the tricarboxylic acid cycle. In Mycobacterium leprae (strain TN), this protein is Phosphoenolpyruvate carboxylase (ppc).